Reading from the N-terminus, the 175-residue chain is Protein-export protein SecB (175 aa).

This sequence belongs to the SecB family. As to quaternary structure, homotetramer, a dimer of dimers. One homotetramer interacts with 1 SecA dimer.

Its subcellular location is the cytoplasm. One of the proteins required for the normal export of preproteins out of the cell cytoplasm. It is a molecular chaperone that binds to a subset of precursor proteins, maintaining them in a translocation-competent state. It also specifically binds to its receptor SecA. The sequence is that of Protein-export protein SecB from Ehrlichia chaffeensis (strain ATCC CRL-10679 / Arkansas).